The following is a 274-amino-acid chain: Large ribosomal subunit protein uL2cz/uL2cy (274 aa).

Disordered stretches follow at residues 1 to 23 (MAIHLYKTSTPSTRNGAVGSQVK) and 223 to 274 (MNPV…RRSK).

It belongs to the universal ribosomal protein uL2 family. Part of the 50S ribosomal subunit.

The protein resides in the plastid. Its subcellular location is the chloroplast. The protein is Large ribosomal subunit protein uL2cz/uL2cy (rpl2-A) of Ranunculus macranthus (Large buttercup).